Here is a 280-residue protein sequence, read N- to C-terminus: Urease accessory protein UreD 1 (280 aa).

The protein belongs to the UreD family. UreD, UreF and UreG form a complex that acts as a GTP-hydrolysis-dependent molecular chaperone, activating the urease apoprotein by helping to assemble the nickel containing metallocenter of UreC. The UreE protein probably delivers the nickel.

It is found in the cytoplasm. Functionally, required for maturation of urease via the functional incorporation of the urease nickel metallocenter. The protein is Urease accessory protein UreD 1 of Brucella canis (strain ATCC 23365 / NCTC 10854 / RM-666).